The sequence spans 580 residues: High affinity choline transporter 1 (580 aa).

The Extracellular portion of the chain corresponds to 1 to 6 (MSFHVE). Residues 7–27 (GLVAIILFYLLIFLVGIWAAW) traverse the membrane as a helical segment. Over 28 to 48 (KTKNSGNPEERSEAIIVGGRD) the chain is Cytoplasmic. Residues 49–69 (IGLLVGGFTMTATWVGGGYIN) form a helical membrane-spanning segment. Residues 70–81 (GTAEAVYGPGCG) are Extracellular-facing. The helical transmembrane segment at 82–102 (LAWAQAPIGYSLSLILGGLFF) threads the bilayer. Residues 103-125 (AKPMRSKGYVTMLDPFQQIYGKR) lie on the Cytoplasmic side of the membrane. A helical membrane pass occupies residues 126–146 (MGGLLFIPALMGEMFWAAAIF). Residues 147 to 164 (SALGATISVIIDVDVNIS) are Extracellular-facing. The chain crosses the membrane as a helical span at residues 165-185 (VIVSALIAILYTLVGGLYSVA). Residues 186 to 191 (YTDVVQ) are Cytoplasmic-facing. The chain crosses the membrane as a helical span at residues 192–212 (LFCIFIGLWISVPFALSHPAV). The Extracellular portion of the chain corresponds to 213-237 (TDIGFTAVHAKYQSPWLGTIESVEV). Residues 238–258 (YTWLDNFLLLMLGGIPWQAYF) traverse the membrane as a helical segment. At 259–274 (QRVLSSSSATYAQVLS) the chain is on the cytoplasmic side. Residues 275–295 (FLAAFGCLVMALPAICIGAIG) traverse the membrane as a helical segment. The Extracellular segment spans residues 296-317 (ASTDWNQTAYGYPDPKTKEEAD). A glycan (N-linked (GlcNAc...) asparagine) is linked at Asn301. The chain crosses the membrane as a helical span at residues 318–338 (MILPIVLQYLCPVYISFFGLG). Topologically, residues 339-376 (AVSAAVMSSADSSILSASSMFARNIYQLSFRQNASDKE) are cytoplasmic. The chain crosses the membrane as a helical span at residues 377-397 (IVWVMRITVLVFGASATAMAL). Residues 398 to 406 (LTKTVYGLW) lie on the Extracellular side of the membrane. A helical membrane pass occupies residues 407-427 (YLSSDLVYIIIFPQLLCVLFI). The Cytoplasmic portion of the chain corresponds to 428-435 (KGTNTYGA). A helical membrane pass occupies residues 436 to 456 (VAGYIFGLFLRITGGEPYLYL). Over 457 to 481 (QPLIFYPGYYSDKNGIYNQRFPFKT) the chain is Extracellular. The chain crosses the membrane as a helical span at residues 482–502 (LSMVTSFFTNICVSYLAKYLF). The segment at 502–580 (FESGTLPPKL…EGSGTEDNLQ (79 aa)) is mediates interaction with SEC14L1. The Cytoplasmic segment spans residues 503-580 (ESGTLPPKLD…EGSGTEDNLQ (78 aa)). The short motif at 527-532 (DKTILV) is the Dileucine-like motif element.

The protein belongs to the sodium:solute symporter (SSF) (TC 2.A.21) family. Homooligomerizes at cell surface. Interacts with SEC14L1; may regulate SLC5A7. Post-translationally, phosphorylated by PKC and dephosphorylated by PP1/PP2A. As to expression, found in spinal cord, brain-stem, mid-brain and striatum. Specific for cholinergic neurons.

It localises to the presynaptic cell membrane. The protein localises to the cell projection. Its subcellular location is the axon. It is found in the early endosome membrane. The protein resides in the cytoplasmic vesicle. It localises to the secretory vesicle. The protein localises to the synaptic vesicle membrane. The catalysed reaction is choline(out) + n Na(+)(out) = choline(in) + n Na(+)(in). Choline uptake activity is regulated by SLC5A7/CHT1 internalization (inactive form) from the cell surface and recycling of internalized SLC5A7/CHT1 into the cell surface (active form). Activated by extracellular chloride ion. Specifically inhibited by nanomolar concentrations of hemicholinium 3. High-affinity Na(+)-coupled choline transmembrane symporter. Functions as an electrogenic, voltage-dependent transporter with variable charge/choline stoichiometry. Choline uptake and choline-induced current is also Cl(-)-dependent where Cl(-) is likely a regulatory ion rather than cotransported ion. Plays a critical role in acetylcholine (ACh) synthesis by taking up the substrate choline from the synaptic cleft into the presynaptic nerve terminals after neurotransmitter release. SLC5A7/CHT1-mediated choline high-affinity transport in cholinergic neurons is the rate-limiting step for production of ACh, thereby facilitating communication by subsequent action potentials. Localized predominantly in presynaptic terminal intracellular organelles, and translocated to the plasma membrane in active form in response to neuronal activity. The protein is High affinity choline transporter 1 of Mus musculus (Mouse).